A 163-amino-acid polypeptide reads, in one-letter code: Single-stranded DNA-binding protein 2 (163 aa).

An SSB domain is found at 1–104 (MINNVVLVGR…VVADNFQMLE (104 aa)). The interval 109-163 (REGGSTGSFNGGFNNNTSSSNSYSAPAQQTPNFGRDDSPFGNSNPMDISDDDLPF) is disordered. Low complexity predominate over residues 119 to 130 (GGFNNNTSSSNS). Over residues 131-140 (YSAPAQQTPN) the composition is skewed to polar residues. An Important for interaction with partner proteins motif is present at residues 158 to 163 (DDDLPF).

As to quaternary structure, homotetramer.

In terms of biological role, plays an important role in DNA replication, recombination and repair. Binds to ssDNA and to an array of partner proteins to recruit them to their sites of action during DNA metabolism. This chain is Single-stranded DNA-binding protein 2 (ssb2), found in Streptococcus pyogenes serotype M6 (strain ATCC BAA-946 / MGAS10394).